The primary structure comprises 603 residues: Putative ankyrin repeat protein FPV162 (603 aa).

14 ANK repeats span residues 23-53 (FKDT…DINV), 57-87 (FKKT…NVNV), 91-120 (FEST…DPNT), 124-155 (NGQT…NVNA), 159-189 (KHNT…DVKI), 193-223 (DGIT…DVNA), 227-257 (EGNT…EVNA), 261-291 (VGDT…NVNA), 295-325 (ISVT…EVNS), 329-362 (YGRT…DIEA), 366-397 (IGGT…DINT), 401-428 (RDET…STNI), 432-467 (SNIT…DIKN), and 504-533 (NNMY…DIYL).

The chain is Putative ankyrin repeat protein FPV162 from Vertebrata (FPV).